We begin with the raw amino-acid sequence, 400 residues long: Elongation factor Tu (400 aa).

The tr-type G domain occupies 10–208; it reads KPHVNVGTIG…AMDNYIPDPQ (199 aa). A G1 region spans residues 19 to 26; sequence GHIDHGKS. A GTP-binding site is contributed by 19–26; the sequence is GHIDHGKS. A Mg(2+)-binding site is contributed by Ser-26. Residues 60 to 64 are G2; sequence GITIN. Residues 81 to 84 are G3; that stretch reads DCPG. GTP contacts are provided by residues 81-85 and 136-139; these read DCPGH and NKTD. The G4 stretch occupies residues 136-139; it reads NKTD. The segment at 174–176 is G5; that stretch reads SAL.

It belongs to the TRAFAC class translation factor GTPase superfamily. Classic translation factor GTPase family. EF-Tu/EF-1A subfamily. Monomer.

It is found in the cytoplasm. The catalysed reaction is GTP + H2O = GDP + phosphate + H(+). Functionally, GTP hydrolase that promotes the GTP-dependent binding of aminoacyl-tRNA to the A-site of ribosomes during protein biosynthesis. The protein is Elongation factor Tu of Thermotoga maritima (strain ATCC 43589 / DSM 3109 / JCM 10099 / NBRC 100826 / MSB8).